The primary structure comprises 208 residues: MQNLKVDESWGNACRQIVQAGQRMDQRGWVPATAGNLSCRLPDGRIAITRSGGHKGFLTDSDVIEITPDGVPVDPANRASAETLLHTQLYAHDPAIGAVLHGHSVAATILSMDEPSDAITLAGYEVLKVFEGQTTHDTSLELPLFHNDQDIARLATVVAPKLSDMRLGYLIRGHGVYVWGKDMFTALARLEGLEFLLACELARLQKKA.

Zn(2+) contacts are provided by His-101 and His-103.

It belongs to the aldolase class II family. MtnB subfamily. Zn(2+) serves as cofactor.

It carries out the reaction 5-(methylsulfanyl)-D-ribulose 1-phosphate = 5-methylsulfanyl-2,3-dioxopentyl phosphate + H2O. It functions in the pathway amino-acid biosynthesis; L-methionine biosynthesis via salvage pathway; L-methionine from S-methyl-5-thio-alpha-D-ribose 1-phosphate: step 2/6. Functionally, catalyzes the dehydration of methylthioribulose-1-phosphate (MTRu-1-P) into 2,3-diketo-5-methylthiopentyl-1-phosphate (DK-MTP-1-P). This Gluconobacter oxydans (strain 621H) (Gluconobacter suboxydans) protein is Methylthioribulose-1-phosphate dehydratase.